The chain runs to 809 residues: MAYEAGKIEKKWQKIWQEKEYFEPKDDFSLPKKYILSMFPYPSGRIHMGHVRNYSIGDAMARYYRKKGFNVLHPIGFDSFGMPAENAAIKHGIHPKKWTYENIDYMQNELASLGFSFSKKRMLATSDPLYTKFEQEFFIKMYEKGLIYTKEAEVNWCENDKTVLANEQVEDGKCWRCGHEVIRKKMPGYYVKITAYADELLQDLKKLEGKWPSQVLTMQENWIGKSTGLSFDFDIEENNKISAKKINVFTTRAETIYGVSYIALAPDHEIVNELIDKKLLDQDVIAKIQNIQNQTPRQRQAAPKEGYFLNLYVIHPLSKEKIPLWVANFVLSDYGSGAVMSVPAHDERDYEFAKTYNLAIKKVIYKDENDAQCYTLKEGVLTSSGEFDQLECNDAREKISLKIESLGIGKKVTNFKIRDWGVSRQRYWGAPIPMIKCDSCGIVPQKIENLPITLPEDVVINGEGNPLDKHETWKECICPKCGKKAQKESDTLDTFFESSWYFARFASDDKTWQEKAVDEKSVNYWMNVDEYIGGIEHAILHLLYARFFQKALRDLGYLKDDEPFNRLLTQGMVTKDGAKMSKSKGNVVDPDYIIEKYGADSARLFILFAAPPAKELEWNDSALEGAFKFINRLYEKAMSLECGKLQEIDHQSLNKEEKYARLKVYEALKKSFEVYEESFAFNTLIAACMEALNALNAINHKEVSKEAFYIILNILEPIIPHVCFELSEYLFKCENFKVLKIKDEVFIKDSFNIAISVNGKKRAQIEINSEAKEDEILALAKENVAKWLEGKTIVKEIYIDKKLVNLVVK.

The short motif at 40-50 is the 'HIGH' region element; sequence PYPSGRIHMGH. Positions 579–583 match the 'KMSKS' region motif; that stretch reads KMSKS. Lys582 contributes to the ATP binding site.

Belongs to the class-I aminoacyl-tRNA synthetase family.

The protein resides in the cytoplasm. The enzyme catalyses tRNA(Leu) + L-leucine + ATP = L-leucyl-tRNA(Leu) + AMP + diphosphate. In Campylobacter lari (strain RM2100 / D67 / ATCC BAA-1060), this protein is Leucine--tRNA ligase.